Reading from the N-terminus, the 204-residue chain is Somatotropin (204 aa).

The N-terminal stretch at 1–17 (MDRAILLLSVVCLVVSS) is a signal peptide. Glutamine 18 is modified (pyrrolidone carboxylic acid). Histidine 36 serves as a coordination point for Zn(2+). Residues cysteine 69 and cysteine 177 are joined by a disulfide bond. Glutamate 186 provides a ligand contact to Zn(2+). Cysteine 194 and cysteine 202 are disulfide-bonded.

This sequence belongs to the somatotropin/prolactin family.

The protein localises to the secreted. In terms of biological role, growth hormone plays an important role in growth control and is involved in the regulation of several anabolic processes. Implicated as an osmoregulatory substance important for seawater adaptation. In Odontesthes argentinensis (Marine silverside), this protein is Somatotropin (gh).